A 141-amino-acid chain; its full sequence is Large ribosomal subunit protein uL13 (141 aa).

The protein belongs to the universal ribosomal protein uL13 family. In terms of assembly, part of the 50S ribosomal subunit.

In terms of biological role, this protein is one of the early assembly proteins of the 50S ribosomal subunit, although it is not seen to bind rRNA by itself. It is important during the early stages of 50S assembly. The protein is Large ribosomal subunit protein uL13 of Helicobacter pylori (strain Shi470).